Reading from the N-terminus, the 85-residue chain is Cell division protein ZapA (85 aa).

Positions 60–85 (AVNVVHDYLKLKEQYEKLEIQLKEKE) form a coiled coil.

Belongs to the ZapA family. Type 2 subfamily. In terms of assembly, homodimer. Interacts with FtsZ.

It is found in the cytoplasm. Its function is as follows. Activator of cell division through the inhibition of FtsZ GTPase activity, therefore promoting FtsZ assembly into bundles of protofilaments necessary for the formation of the division Z ring. It is recruited early at mid-cell but it is not essential for cell division. This chain is Cell division protein ZapA, found in Bacillus pumilus (strain SAFR-032).